Consider the following 329-residue polypeptide: Vitamin B12 import system permease protein BtuC (329 aa).

A run of 9 helical transmembrane segments spans residues 22 to 42, 64 to 84, 91 to 111, 115 to 135, 149 to 169, 187 to 207, 243 to 263, 277 to 297, and 305 to 325; these read LSVL…QWIA, LAVL…QALF, PGLL…VLLG, LPGW…TLIL, LLAG…AIYF, GGVD…SLWI, GWMV…GLVI, ALLP…DVIA, and ELPI…WLLL.

This sequence belongs to the binding-protein-dependent transport system permease family. FecCD subfamily. As to quaternary structure, the complex is composed of two ATP-binding proteins (BtuD), two transmembrane proteins (BtuC) and a solute-binding protein (BtuF).

Its subcellular location is the cell inner membrane. Part of the ABC transporter complex BtuCDF involved in vitamin B12 import. Involved in the translocation of the substrate across the membrane. This Citrobacter koseri (strain ATCC BAA-895 / CDC 4225-83 / SGSC4696) protein is Vitamin B12 import system permease protein BtuC.